A 283-amino-acid chain; its full sequence is Pantothenate synthetase (283 aa).

Position 30–37 (30–37 (MGNLHAGH)) interacts with ATP. Catalysis depends on histidine 37, which acts as the Proton donor. Glutamine 61 serves as a coordination point for (R)-pantoate. Glutamine 61 contributes to the beta-alanine binding site. 149–152 (GEKD) serves as a coordination point for ATP. Glutamine 155 is a (R)-pantoate binding site. ATP-binding positions include valine 178 and 186 to 189 (LSSR).

The protein belongs to the pantothenate synthetase family. As to quaternary structure, homodimer.

It localises to the cytoplasm. The catalysed reaction is (R)-pantoate + beta-alanine + ATP = (R)-pantothenate + AMP + diphosphate + H(+). The protein operates within cofactor biosynthesis; (R)-pantothenate biosynthesis; (R)-pantothenate from (R)-pantoate and beta-alanine: step 1/1. Functionally, catalyzes the condensation of pantoate with beta-alanine in an ATP-dependent reaction via a pantoyl-adenylate intermediate. This is Pantothenate synthetase from Pseudomonas paraeruginosa (strain DSM 24068 / PA7) (Pseudomonas aeruginosa (strain PA7)).